We begin with the raw amino-acid sequence, 156 residues long: Cyanate hydratase (156 aa).

Residues Arg96, Glu99, and Ser122 contribute to the active site.

It belongs to the cyanase family.

It catalyses the reaction cyanate + hydrogencarbonate + 3 H(+) = NH4(+) + 2 CO2. Functionally, catalyzes the reaction of cyanate with bicarbonate to produce ammonia and carbon dioxide. The protein is Cyanate hydratase of Burkholderia lata (strain ATCC 17760 / DSM 23089 / LMG 22485 / NCIMB 9086 / R18194 / 383).